The chain runs to 262 residues: GTP cyclohydrolase 1 type 2 homolog (262 aa).

A divalent metal cation is bound by residues H65, D102, H222, and E225.

Belongs to the GTP cyclohydrolase I type 2/NIF3 family. Homohexamer.

The chain is GTP cyclohydrolase 1 type 2 homolog from Streptococcus pyogenes serotype M3 (strain ATCC BAA-595 / MGAS315).